The following is a 315-amino-acid chain: uncharacterized protein (315 aa).

Residues 296-308 (RSKLRKGTHKRTP) show a composition bias toward basic residues. Residues 296–315 (RSKLRKGTHKRTPGRAGDAD) are disordered.

This sequence belongs to the metallo-dependent hydrolases superfamily. Peptidase M19 family.

This is an uncharacterized protein from Acinetobacter calcoaceticus.